We begin with the raw amino-acid sequence, 224 residues long: Ribose-5-phosphate isomerase A (224 aa).

Substrate-binding positions include 33-36 (TGST), 86-89 (DGAD), and 99-102 (KGGG). E108 functions as the Proton acceptor in the catalytic mechanism. K126 is a binding site for substrate.

Belongs to the ribose 5-phosphate isomerase family. As to quaternary structure, homodimer.

It catalyses the reaction aldehydo-D-ribose 5-phosphate = D-ribulose 5-phosphate. Its pathway is carbohydrate degradation; pentose phosphate pathway; D-ribose 5-phosphate from D-ribulose 5-phosphate (non-oxidative stage): step 1/1. Catalyzes the reversible conversion of ribose-5-phosphate to ribulose 5-phosphate. In Bordetella avium (strain 197N), this protein is Ribose-5-phosphate isomerase A.